The primary structure comprises 73 residues: Mu-conotoxin PIIIA (73 aa).

The first 19 residues, 1-19, serve as a signal peptide directing secretion; the sequence is MSKLGVLLTICLLLFPITA. The propeptide occupies 20–49; that stretch reads LPMDGDQPADRLAERMQDNISSEEHPFEKR. Residue Q50 is modified to Pyrrolidone carboxylic acid. Intrachain disulfides connect C53-C65, C53-C70, C54-C70, C54-C71, C60-C65, and C60-C71. The residue at position 57 (P57) is a 4-hydroxyproline. P67 is modified (4-hydroxyproline). C71 bears the Cysteine amide mark.

Belongs to the conotoxin M superfamily. In terms of processing, 3D-structure of 3 disulfide-bond connectivities isomers is described (PIIIA-1 (C1-C5, C2-C6, C3-C4), PIIIA-2 (C1-C4, C2-C5, C3-C6) and PIIIA-3 (C1-C2, C3-C4, C5-C6)). Only PIIIA-2 contains the cysteine connectivity described as typical for native mu-conotoxins. However, PIIIA-1 is more potent than PIIIA-2, suggesting another possible disulfid connectivity. For this reason, both connectivities have been indicated in features. In terms of tissue distribution, expressed by the venom duct.

The protein resides in the secreted. Its function is as follows. Mu-conotoxins block voltage-gated sodium channels (Nav). This toxin potently blocks rNav1.4/SCN4A (IC(50)=36-41 nM). It also moderately blocks rNav1.1/SCN1A (IC(50)=120 nM), rNav1.2/SCN2A (IC(50)=620 nM), rNav1.3/SCN3A (IC(50)=3.2 uM), mNav1.6/SCN8A (IC(50)=100 nM). This inhibition is reversible. The block of Nav1.1, Nav1.2, and Nav1.6 is modified when beta-subunits are coexpressed with alpha subunits. Hence, blocks of channels containing the beta-1 and beta-3 subunits are more potent (compared to channels without beta subunits), whereas blocks of channels containing the beta-2 and beta-4 are less potent (compared to channels without beta subunits). In vivo, this peptide causes flaccid paralysis in both mice and fish. This is Mu-conotoxin PIIIA from Conus purpurascens (Purple cone).